The sequence spans 299 residues: Lathosterol oxidase (299 aa).

The next 3 helical transmembrane spans lie at 32 to 52 (VSLL…CATL), 79 to 99 (FTVK…LLEL), and 117 to 137 (IHLI…IYWI). A Fatty acid hydroxylase domain is found at 124 to 252 (ISFLFFTDML…YFTLWDRIGG (129 aa)). Positions 138–143 (HRGLHH) match the Histidine box-1 motif. Positions 151-155 (HKPHH) match the Histidine box-2 motif. A Histidine box-3 motif is present at residues 228–233 (HHTDHH). Ser253 carries the phosphoserine modification.

The protein belongs to the sterol desaturase family. Fe cation is required as a cofactor.

Its subcellular location is the endoplasmic reticulum membrane. The catalysed reaction is a Delta(7)-sterol + 2 Fe(II)-[cytochrome b5] + O2 + 2 H(+) = a Delta(5),Delta(7)-sterol + 2 Fe(III)-[cytochrome b5] + 2 H2O. It catalyses the reaction lathosterol + 2 Fe(II)-[cytochrome b5] + O2 + 2 H(+) = 7-dehydrocholesterol + 2 Fe(III)-[cytochrome b5] + 2 H2O. It carries out the reaction 5alpha-cholesta-7,24-dien-3beta-ol + 2 Fe(II)-[cytochrome b5] + O2 + 2 H(+) = 7-dehydrodesmosterol + 2 Fe(III)-[cytochrome b5] + 2 H2O. It participates in steroid biosynthesis; cholesterol biosynthesis. Catalyzes the penultimate step of the biosynthesis of cholesterol, the dehydrogenation of lathosterol into 7-dehydrocholesterol (7-DHC). Cholesterol is the major sterol component in mammalian membranes and a precursor for bile acid and steroid hormone synthesis. In addition to its essential role in cholesterol biosynthesis, it also indirectly regulates ferroptosis through the production of 7-DHC. By diverting the spread of damage caused by peroxyl radicals from the phospholipid components to its sterol nucleus, 7-DHC prevents this form of cell death. This chain is Lathosterol oxidase, found in Rattus norvegicus (Rat).